We begin with the raw amino-acid sequence, 267 residues long: NAD kinase 2 (267 aa).

Aspartate 52 acts as the Proton acceptor in catalysis. NAD(+) contacts are provided by residues 52 to 53 (DG), 124 to 125 (NE), arginine 151, aspartate 153, 164 to 169 (TAYNKS), and alanine 188.

This sequence belongs to the NAD kinase family. It depends on a divalent metal cation as a cofactor.

Its subcellular location is the cytoplasm. It catalyses the reaction NAD(+) + ATP = ADP + NADP(+) + H(+). Its function is as follows. Involved in the regulation of the intracellular balance of NAD and NADP, and is a key enzyme in the biosynthesis of NADP. Catalyzes specifically the phosphorylation on 2'-hydroxyl of the adenosine moiety of NAD to yield NADP. The sequence is that of NAD kinase 2 from Bacillus subtilis (strain 168).